The chain runs to 520 residues: 2-isopropylmalate synthase (520 aa).

One can recognise a Pyruvate carboxyltransferase domain in the interval 12 to 274; it reads VIIFDTTLRD…WNKIDTTQLT (263 aa). Residues Asp21, His209, His211, and Asn245 each coordinate Mn(2+). The interval 398-520 is regulatory domain; it reads KLTSLTVIAG…RDTVTTAAAS (123 aa).

It belongs to the alpha-IPM synthase/homocitrate synthase family. LeuA type 1 subfamily. Homodimer. It depends on Mn(2+) as a cofactor.

The protein localises to the cytoplasm. The catalysed reaction is 3-methyl-2-oxobutanoate + acetyl-CoA + H2O = (2S)-2-isopropylmalate + CoA + H(+). It participates in amino-acid biosynthesis; L-leucine biosynthesis; L-leucine from 3-methyl-2-oxobutanoate: step 1/4. In terms of biological role, catalyzes the condensation of the acetyl group of acetyl-CoA with 3-methyl-2-oxobutanoate (2-ketoisovalerate) to form 3-carboxy-3-hydroxy-4-methylpentanoate (2-isopropylmalate). This is 2-isopropylmalate synthase from Bradyrhizobium diazoefficiens (strain JCM 10833 / BCRC 13528 / IAM 13628 / NBRC 14792 / USDA 110).